The chain runs to 433 residues: Zinc carboxypeptidase A 1 (433 aa).

The signal sequence occupies residues 1 to 28 (MVRLNSAAGSRWWAPAMAILAVALSVEA). The 294-residue stretch at 130-423 (DYHTLEEIHA…DSLITLLEES (294 aa)) folds into the Peptidase M14 domain. His-187 and Glu-190 together coordinate Zn(2+). Cys-253 and Cys-276 are joined by a disulfide. His-312 contributes to the Zn(2+) binding site. The active-site Proton donor/acceptor is Glu-387.

The protein belongs to the peptidase M14 family. The cofactor is Zn(2+). In terms of tissue distribution, expressed in the posterior midgut in pupae and female adults.

The protein resides in the secreted. Its function is as follows. Involved in the digestion of the blood meal. This is Zinc carboxypeptidase A 1 from Anopheles gambiae (African malaria mosquito).